Here is a 304-residue protein sequence, read N- to C-terminus: N-acetyl-D-glucosamine kinase (304 aa).

ATP is bound by residues 4-11 (GFDMGGTK) and 133-140 (GVGGGLIV). Residues His-157, Cys-177, Cys-179, and Cys-184 each contribute to the Zn(2+) site.

The protein belongs to the ROK (NagC/XylR) family. NagK subfamily.

It catalyses the reaction N-acetyl-D-glucosamine + ATP = N-acetyl-D-glucosamine 6-phosphate + ADP + H(+). Its pathway is cell wall biogenesis; peptidoglycan recycling. In terms of biological role, catalyzes the phosphorylation of N-acetyl-D-glucosamine (GlcNAc) derived from cell-wall degradation, yielding GlcNAc-6-P. This is N-acetyl-D-glucosamine kinase from Yersinia pseudotuberculosis serotype IB (strain PB1/+).